Consider the following 244-residue polypeptide: 1-(5-phosphoribosyl)-5-[(5-phosphoribosylamino)methylideneamino] imidazole-4-carboxamide isomerase (244 aa).

Aspartate 9 serves as the catalytic Proton acceptor. The Proton donor role is filled by aspartate 131.

Belongs to the HisA/HisF family.

The protein resides in the cytoplasm. It carries out the reaction 1-(5-phospho-beta-D-ribosyl)-5-[(5-phospho-beta-D-ribosylamino)methylideneamino]imidazole-4-carboxamide = 5-[(5-phospho-1-deoxy-D-ribulos-1-ylimino)methylamino]-1-(5-phospho-beta-D-ribosyl)imidazole-4-carboxamide. Its pathway is amino-acid biosynthesis; L-histidine biosynthesis; L-histidine from 5-phospho-alpha-D-ribose 1-diphosphate: step 4/9. The polypeptide is 1-(5-phosphoribosyl)-5-[(5-phosphoribosylamino)methylideneamino] imidazole-4-carboxamide isomerase (Campylobacter jejuni subsp. doylei (strain ATCC BAA-1458 / RM4099 / 269.97)).